The sequence spans 505 residues: RNA-splicing ligase RtcB homolog (505 aa).

The Mn(2+) site is built by D119, C122, H227, and H259. 226–230 is a binding site for GMP; the sequence is NHYAE. At S300 the chain carries Phosphoserine. H353 serves as a coordination point for Mn(2+). GMP-binding positions include 353–354, 402–405, S409, and 428–431; these read HN, GGTM, and HGAG. H428 serves as the catalytic GMP-histidine intermediate. K496 participates in a covalent cross-link: Glycyl lysine isopeptide (Lys-Gly) (interchain with G-Cter in SUMO2). K504 serves as a coordination point for GMP.

The protein belongs to the RtcB family. Catalytic component of the tRNA-splicing ligase complex. Mn(2+) is required as a cofactor.

It localises to the nucleus. The protein resides in the cytoplasm. It carries out the reaction a 3'-end 3'-phospho-ribonucleotide-RNA + a 5'-end dephospho-ribonucleoside-RNA + GTP = a ribonucleotidyl-ribonucleotide-RNA + GMP + diphosphate. The catalysed reaction is a 3'-end 2',3'-cyclophospho-ribonucleotide-RNA + a 5'-end dephospho-ribonucleoside-RNA + GTP + H2O = a ribonucleotidyl-ribonucleotide-RNA + GMP + diphosphate + H(+). Its function is as follows. Catalytic subunit of the tRNA-splicing ligase complex that acts by directly joining spliced tRNA halves to mature-sized tRNAs by incorporating the precursor-derived splice junction phosphate into the mature tRNA as a canonical 3',5'-phosphodiester. May act as an RNA ligase with broad substrate specificity, and may function toward other RNAs. In Macaca fascicularis (Crab-eating macaque), this protein is RNA-splicing ligase RtcB homolog.